We begin with the raw amino-acid sequence, 243 residues long: Hydroxyacylglutathione hydrolase (243 aa).

Positions 59, 61, 63, 64, 117, 135, and 173 each coordinate Zn(2+).

It belongs to the metallo-beta-lactamase superfamily. Glyoxalase II family. Monomer. It depends on Zn(2+) as a cofactor.

It catalyses the reaction an S-(2-hydroxyacyl)glutathione + H2O = a 2-hydroxy carboxylate + glutathione + H(+). It participates in secondary metabolite metabolism; methylglyoxal degradation; (R)-lactate from methylglyoxal: step 2/2. Functionally, thiolesterase that catalyzes the hydrolysis of S-D-lactoyl-glutathione to form glutathione and D-lactic acid. The polypeptide is Hydroxyacylglutathione hydrolase (Acidiphilium cryptum (strain JF-5)).